We begin with the raw amino-acid sequence, 346 residues long: MEEKIRLTQYSHGAGUGCKISPKVLGTILHSELEKFYDPNLIVGNETADDAAVYDLGNGTAIISTTDFFMPIVDDPFDFGRIAATNAISDIFAMGGKPIMGIAILGFPTNVLPAEVAQKIVDGGRFACHQAGIALAGGHSIDSPEPIFGLAVTGVIDTEKVKRNASAKSGCKLYMTKPLGIGILTTAEKKGKLKPEHQGLATAAMCQMNSIGSQFSQVDGVTAMTDVTGFGLLGHLIEICEGSNLSAVVFSDKIKTLDGVKDYIAQGCVPGGTGRNFDSYGHKVGILTEEQKAILCDPQTSGGLLVAVELNSVQTVIDIAKDAGIDLYEVGKLKPKSESDIVVEVK.

Selenocysteine 16 is an active-site residue. Selenocysteine 16 is a non-standard amino acid (selenocysteine). Residues lysine 19 and 47-49 (TAD) contribute to the ATP site. Aspartate 50 serves as a coordination point for Mg(2+). Residues aspartate 67, aspartate 90, and 138–140 (GHS) each bind ATP. Aspartate 90 provides a ligand contact to Mg(2+). Aspartate 226 provides a ligand contact to Mg(2+).

Belongs to the selenophosphate synthase 1 family. Class I subfamily. In terms of assembly, homodimer. It depends on Mg(2+) as a cofactor.

It carries out the reaction hydrogenselenide + ATP + H2O = selenophosphate + AMP + phosphate + 2 H(+). Its function is as follows. Synthesizes selenophosphate from selenide and ATP. The chain is Selenide, water dikinase from Haemophilus influenzae (strain ATCC 51907 / DSM 11121 / KW20 / Rd).